Reading from the N-terminus, the 566-residue chain is UvrABC system protein C (566 aa).

A GIY-YIG domain is found at Glu-16–Val-93. The UVR domain occupies Ala-199–Leu-234.

It belongs to the UvrC family. As to quaternary structure, interacts with UvrB in an incision complex.

The protein localises to the cytoplasm. Its function is as follows. The UvrABC repair system catalyzes the recognition and processing of DNA lesions. UvrC both incises the 5' and 3' sides of the lesion. The N-terminal half is responsible for the 3' incision and the C-terminal half is responsible for the 5' incision. This is UvrABC system protein C from Aquifex aeolicus (strain VF5).